Reading from the N-terminus, the 230-residue chain is Small ribosomal subunit protein uS3 (230 aa).

Residues 39–107 form the KH type-2 domain; sequence VRNYLRQKLA…PIHVNIEEIR (69 aa). Residues 210-230 form a disordered region; the sequence is SSKPEHESKQRKAGRRNAAAN.

This sequence belongs to the universal ribosomal protein uS3 family. In terms of assembly, part of the 30S ribosomal subunit. Forms a tight complex with proteins S10 and S14.

Its function is as follows. Binds the lower part of the 30S subunit head. Binds mRNA in the 70S ribosome, positioning it for translation. This chain is Small ribosomal subunit protein uS3, found in Neisseria gonorrhoeae (strain ATCC 700825 / FA 1090).